The sequence spans 378 residues: Homeobox protein Meis3 (378 aa).

Residues 24 to 57 (FSEAAPSVPRAPGPYTPHRPPQLQAPGLDSDSLK) are disordered. The span at 32–43 (PRAPGPYTPHRP) shows a compositional bias: pro residues. Residues 99–182 (GGDVCSSDSF…PIDLVIEDRD (84 aa)) enclose the MEIS N-terminal domain. Residues 203 to 265 (NTTWIRDHED…DEDLDLERRR (63 aa)) are disordered. Residues 230-244 (SQSGDNSSDQGDGLD) are compositionally biased toward low complexity. Residues 265-327 (RNKKRGIFPK…NARRRIVQPM (63 aa)) constitute a DNA-binding region (homeobox; TALE-type).

This sequence belongs to the TALE/MEIS homeobox family. As to expression, expressed at high levels in the brain. Significant expression also observed in the heart, spleen and lung. Expressed in pancreatic islets (beta-cells and non-beta-cells).

It is found in the nucleus. Functionally, transcriptional regulator which directly modulates PDPK1 expression, thus promoting survival of pancreatic beta-cells. Also regulates expression of NDFIP1, BNIP3, and CCNG1. In Mus musculus (Mouse), this protein is Homeobox protein Meis3 (Meis3).